The following is a 345-amino-acid chain: Glycosyltransferase 1 domain-containing protein 1 (345 aa).

Residues 1 to 19 (MKILFLACLRAHTGNSTTA) form the signal peptide. N-linked (GlcNAc...) asparagine glycosylation is found at asparagine 246 and asparagine 322.

Belongs to the glycosyltransferase group 1 family. Glycosyltransferase 4 subfamily.

The protein localises to the secreted. In Xenopus tropicalis (Western clawed frog), this protein is Glycosyltransferase 1 domain-containing protein 1 (glt1d1).